The sequence spans 378 residues: Tafazzin (378 aa).

The Mitochondrial intermembrane segment spans residues 1-137 (MFMVVCSNLR…RLRNPSKFWY (137 aa)). Residues 46-112 (APEARPVPDE…DQDADPSLDV (67 aa)) form a disordered region. Over residues 51–67 (PVPDERYPGSQQDRKDI) the composition is skewed to basic and acidic residues. Residues 138–158 (VVSQFVVSAVGIFSKVVLMFL) lie within the membrane without spanning it. The Mitochondrial intermembrane portion of the chain corresponds to 159 to 378 (NKPRVYNRER…ETEKLHRERN (220 aa)). Positions 188 to 193 (HYSCFD) match the HXXXXD motif motif.

The protein belongs to the taffazin family. Associates with multiple protein complexes. Association with large protein complexes occurs only in the presence of cardiolipin.

The protein localises to the mitochondrion outer membrane. Its subcellular location is the mitochondrion inner membrane. It localises to the mitochondrion. It is found in the mitochondrion membrane. The protein resides in the golgi apparatus membrane. The protein localises to the endoplasmic reticulum membrane. It catalyses the reaction 1'-[1,2-diacyl-sn-glycero-3-phospho],3'-[1-acyl-sn-glycero-3-phospho]-glycerol + a 1,2-diacyl-sn-glycero-3-phosphocholine = a cardiolipin + a 1-acyl-sn-glycero-3-phosphocholine. The catalysed reaction is 1'-[1,2-di-(9Z,12Z-octadecadienoyl)-sn-glycero-3-phospho]-3'-[1-(9Z,12Z-octadecadienoyl)-sn-glycero-3-phospho]-glycerol + 1-hexadecanoyl-2-(9Z,12Z-octadecadienoyl)-sn-glycero-3-phosphocholine = 1',3'-bis-[1,2-di-(9Z,12Z-octadecadienoyl)-sn-glycero-3-phospho]-glycerol + 1-hexadecanoyl-sn-glycero-3-phosphocholine. It carries out the reaction 1'-[1,2-di-(9Z,12Z-octadecadienoyl)-sn-glycero-3-phospho]-3'-[2-(9Z,12Z-octadecadienoyl)-sn-glycero-3-phospho]-glycerol + 1-hexadecanoyl-2-(9Z,12Z-octadecadienoyl)-sn-glycero-3-phosphocholine = 1',3'-bis-[1,2-di-(9Z,12Z-octadecadienoyl)-sn-glycero-3-phospho]-glycerol + 1-hexadecanoyl-sn-glycero-3-phosphocholine. The enzyme catalyses 1,2-di-(9Z,12Z-octadecadienoyl)-sn-glycero-3-phosphocholine + 1'-[1,2-di-(9Z,12Z-octadecadienoyl)-sn-glycero-3-phospho]-3'-[1-(9Z,12Z-octadecadienoyl)-sn-glycero-3-phospho]-glycerol = 1-(9Z,12Z)-octadecadienoyl-sn-glycero-3-phosphocholine + 1',3'-bis-[1,2-di-(9Z,12Z-octadecadienoyl)-sn-glycero-3-phospho]-glycerol. It catalyses the reaction 1-tetradecanoyl-sn-glycero-3-phosphocholine + 1',3'-bis-[1,2-di-(9Z,12Z-octadecadienoyl)-sn-glycero-3-phospho]-glycerol = 1-tetradecanoyl-2-(9Z,12Z-octadecadienoyl)-sn-glycero-3-phosphocholine + 1'-[1,2-di-(9Z,12Z-octadecadienoyl)-sn-glycero-3-phospho]-3'-[1-(9Z,12Z-octadecadienoyl)-sn-glycero-3-phospho]-glycerol. The catalysed reaction is 1',3'-bis[1,2-di-(9Z-octadecenoyl)-sn-glycero-3-phospho]-glycerol + 1-nonadecanoyl-sn-glycero-3-phosphocholine = 1-nonadecanoyl-2-(9Z-octadecenoyl)-sn-glycero-3-phosphocholine + 1'-[1,2-di-(9Z-octadecenoyl)-sn-glycero-3-phospho]-3'-[1-(9Z-octadecenoyl)-sn-glycero-3-phospho]-glycerol. It carries out the reaction a 1,2-diacyl-sn-glycero-3-phospho-(1'-sn-glycerol) + a 1-acyl-sn-glycero-3-phosphocholine = 1-acyl-sn-glycero-3-phospho-(1'-sn-glycerol) + a 1,2-diacyl-sn-glycero-3-phosphocholine. The enzyme catalyses 1-hexadecanoyl-2-(9Z,12Z-octadecadienoyl)-sn-glycero-3-phospho-(1'-sn-glycerol) + 1-hexadecanoyl-sn-glycero-3-phosphocholine = 1-hexadecanoyl-sn-glycero-3-phospho-(1'-sn-glycerol) + 1-hexadecanoyl-2-(9Z,12Z-octadecadienoyl)-sn-glycero-3-phosphocholine. It catalyses the reaction 1,2-di-(9Z-octadecenoyl)-sn-glycero-3-phospho-(1'-sn-glycerol) + 1-nonadecanoyl-sn-glycero-3-phosphocholine = 1-nonadecanoyl-2-(9Z-octadecenoyl)-sn-glycero-3-phosphocholine + 1-(9Z-octadecenoyl)-sn-glycero-3-phospho-(1'-sn-glycerol). The catalysed reaction is a 1,2-diacyl-sn-glycero-3-phosphate + a 1-acyl-sn-glycero-3-phosphocholine = a 1-acyl-sn-glycero-3-phosphate + a 1,2-diacyl-sn-glycero-3-phosphocholine. It carries out the reaction 1-hexadecanoyl-2-(9Z,12Z-octadecadienoyl)-sn-glycero-3-phosphate + 1-hexadecanoyl-sn-glycero-3-phosphocholine = 1-hexadecanoyl-2-(9Z,12Z-octadecadienoyl)-sn-glycero-3-phosphocholine + 1-hexadecanoyl-sn-glycero-3-phosphate. The enzyme catalyses 1-hexadecanoyl-2-(9Z,12Z-octadecadienoyl)-sn-glycero-3-phosphocholine + 1-(9Z-octadecenoyl)-sn-glycero-3-phosphate = 1-(9Z)-octadecenoyl-2-(9Z,12Z)-octadecadienoyl-sn-glycero-3-phosphate + 1-hexadecanoyl-sn-glycero-3-phosphocholine. It catalyses the reaction a 1-acyl-sn-glycero-3-phosphocholine + a 1,2-diacyl-sn-glycero-3-phosphoethanolamine = a 1-acyl-sn-glycero-3-phosphoethanolamine + a 1,2-diacyl-sn-glycero-3-phosphocholine. The catalysed reaction is 1-hexadecanoyl-2-(9Z,12Z-octadecadienoyl)-sn-glycero-3-phosphoethanolamine + 1-hexadecanoyl-sn-glycero-3-phosphocholine = 1-hexadecanoyl-2-(9Z,12Z-octadecadienoyl)-sn-glycero-3-phosphocholine + 1-hexadecanoyl-sn-glycero-3-phosphoethanolamine. It carries out the reaction 1,2-di-(9Z,12Z-octadecadienoyl)-sn-glycero-3-phosphoethanolamine + 1-tetradecanoyl-sn-glycero-3-phosphocholine = 1-(9Z,12Z-octadecadienoyl)-sn-glycero-3-phosphoethanolamine + 1-tetradecanoyl-2-(9Z,12Z-octadecadienoyl)-sn-glycero-3-phosphocholine. The enzyme catalyses 1'-[1,2-diacyl-sn-glycero-3-phospho],3'-[1-acyl-sn-glycero-3-phospho]-glycerol + a 1,2-diacyl-sn-glycero-3-phosphoethanolamine = a cardiolipin + a 1-acyl-sn-glycero-3-phosphoethanolamine. It catalyses the reaction 1-hexadecanoyl-2-(9Z,12Z-octadecadienoyl)-sn-glycero-3-phosphoethanolamine + 1'-[1,2-di-(9Z,12Z-octadecadienoyl)-sn-glycero-3-phospho]-3'-[1-(9Z,12Z-octadecadienoyl)-sn-glycero-3-phospho]-glycerol = 1',3'-bis-[1,2-di-(9Z,12Z-octadecadienoyl)-sn-glycero-3-phospho]-glycerol + 1-hexadecanoyl-sn-glycero-3-phosphoethanolamine. The catalysed reaction is 1'-[1-(9Z,12Z-octadecadienoyl)-2-(9Z-octadecenoyl)-sn-glycero-3-phospho]-3'-[1-(9Z,12Z-octadecadienoyl)-sn-glycero-3-phospho]-glycerol + 1',3'-bis-[1,2-di-(9Z,12Z-octadecadienoyl)-sn-glycero-3-phospho]-glycerol = 1'-[1,2-di-(9Z,12Z-octadecadienoyl)-sn-glycero-3-phospho]-3'-[1-(9Z,12Z-octadecadienoyl)-2-(9Z-octadecenoyl)-sn-glycero-3-phospho]-glycerol + 1'-[1,2-di-(9Z,12Z-octadecadienoyl)-sn-glycero-3-phospho]-3'-[1-(9Z,12Z-octadecadienoyl)-sn-glycero-3-phospho]-glycerol. It carries out the reaction 1,2-di-(9Z-hexadecenoyl)-sn-glycero-3-phosphocholine + 1-hexadecanoyl-sn-glycero-3-phosphocholine = 1-hexadecanoyl-2-(9Z-hexadecenoyl)-sn-glycero-3-phosphocholine + 1-(9Z-hexadecenoyl)-sn-glycero-3-phosphocholine. The enzyme catalyses 1,2-dioctadecanoyl-sn-glycero-3-phosphocholine + 1-hexadecanoyl-sn-glycero-3-phosphocholine = 1-hexadecanoyl-2-octadecanoyl-sn-glycero-3-phosphocholine + 1-octadecanoyl-sn-glycero-3-phosphocholine. It catalyses the reaction 1,2-di-(9Z-octadecenoyl)-sn-glycero-3-phosphocholine + 1-hexadecanoyl-sn-glycero-3-phosphocholine = 1-hexadecanoyl-2-(9Z-octadecenoyl)-sn-glycero-3-phosphocholine + 1-(9Z-octadecenoyl)-sn-glycero-3-phosphocholine. The catalysed reaction is 1,2-di-(9Z,12Z-octadecadienoyl)-sn-glycero-3-phosphocholine + 1-(9Z-octadecenoyl)-sn-glycero-3-phosphocholine = 1-(9Z)-octadecenoyl-2-(9Z,12Z)-octadecadienoyl-sn-glycero-3-phosphocholine + 1-(9Z,12Z)-octadecadienoyl-sn-glycero-3-phosphocholine. It carries out the reaction 1,2-di-(9Z,12Z,15Z-octadecatrienoyl)-sn-glycero-3-phosphocholine + 1-tetradecanoyl-sn-glycero-3-phosphocholine = 1-tetradecanoyl-2-(9Z,12Z,15Z-octadecatrienoyl)-sn-glycero-3-phosphocholine + 1-(9Z,12Z,15Z-octadecatrienoyl)-sn-glycero-3-phosphocholine. The enzyme catalyses 1-nonadecanoyl-sn-glycero-3-phosphocholine + 1-octadecanoyl-2-(9Z-octadecenoyl)-sn-glycero-3-phosphocholine = 1-nonadecanoyl-2-(9Z-octadecenoyl)-sn-glycero-3-phosphocholine + 1-octadecanoyl-sn-glycero-3-phosphocholine. It catalyses the reaction 1-(9Z)-octadecenoyl-2-octadecanoyl-sn-glycero-3-phosphocholine + 1-nonadecanoyl-sn-glycero-3-phosphocholine = 2-octadecanoyl-sn-glycero-3-phosphocholine + 1-nonadecanoyl-2-(9Z-octadecenoyl)-sn-glycero-3-phosphocholine. It participates in phospholipid metabolism. Its function is as follows. Acyltransferase required to remodel newly synthesized phospholipid cardiolipin (1',3'-bis-[1,2-diacyl-sn-glycero-3-phospho]-glycerol or CL), a key component of the mitochondrial inner membrane, with tissue specific acyl chains necessary for adequate mitochondrial function. Its role in cellular physiology is to improve mitochondrial performance. CL is critical for the coassembly of lipids and proteins in mitochondrial membranes. For instance, remodeling of the acyl groups of CL in the mitochondrial inner membrane affects the assembly and stability of respiratory chain complex IV and its supercomplex forms. Catalyzes the transacylation between phospholipids and lysophospholipids, with the highest rate being between phosphatidylcholine (1,2-diacyl-sn-glycero-3-phosphocholine or PC) and CL. Catalyzes both 1-acyl-sn-glycero-3-phosphocholine (lysophosphatidylcholine or LPC) reacylation and PC-CL transacylation, that means, it exchanges acyl groups between CL and PC by a combination of forward and reverse transacylations. Also catalyzes transacylations between other phospholipids such as phosphatidylethanolamine (1,2-diacyl-sn-glycero-3-phosphoethanolamine or PE) and CL, between PC and PE, and between PC and phosphatidate (1,2-diacyl-sn-glycero-3-phosphate or PA), although at lower rate. Not regiospecific, it transfers acyl groups into any of the sn-1 and sn-2 positions of the monolysocardiolipin (MLCL), which is an important prerequisite for uniformity and symmetry in CL acyl distribution. Cannot transacylate dilysocardiolipin (DLCL), thus, the role of MLCL is limited to that of an acyl acceptor. CoA-independent, it can reshuffle molecular species within a single phospholipid class. Redistributes fatty acids between MLCL, CL, and other lipids, which prolongs the half-life of CL. Its action is completely reversible, which allows for cyclic changes, such as fission and fusion or bending and flattening of the membrane. Hence, by contributing to the flexibility of the lipid composition, it plays an important role in the dynamics of mitochondria membranes. Essential for the final stage of spermatogenesis, spermatid individualization. Required for the initiation of mitophagy. The chain is Tafazzin from Drosophila melanogaster (Fruit fly).